The chain runs to 305 residues: Ribonuclease BN (305 aa).

Residues His-64, His-66, Asp-68, His-69, His-141, Asp-212, and His-270 each coordinate Zn(2+). The Proton acceptor role is filled by Asp-68.

It belongs to the RNase Z family. RNase BN subfamily. As to quaternary structure, homodimer. Requires Zn(2+) as cofactor.

Its function is as follows. Zinc phosphodiesterase, which has both exoribonuclease and endoribonuclease activities. This is Ribonuclease BN from Enterobacter sp. (strain 638).